The following is a 339-amino-acid chain: Ribosomal RNA small subunit methyltransferase H (339 aa).

S-adenosyl-L-methionine is bound by residues 52–54 (GGH), Asp71, Phe98, Asp130, and Gln137.

Belongs to the methyltransferase superfamily. RsmH family.

The protein resides in the cytoplasm. It carries out the reaction cytidine(1402) in 16S rRNA + S-adenosyl-L-methionine = N(4)-methylcytidine(1402) in 16S rRNA + S-adenosyl-L-homocysteine + H(+). Functionally, specifically methylates the N4 position of cytidine in position 1402 (C1402) of 16S rRNA. This is Ribosomal RNA small subunit methyltransferase H from Corynebacterium diphtheriae (strain ATCC 700971 / NCTC 13129 / Biotype gravis).